A 173-amino-acid chain; its full sequence is Zinc finger A20 and AN1 domain-containing stress-associated protein 2 (173 aa).

Residues 12–46 (PEGPKLCTNNCGFFGSAATMNMCSKCHKDMLFQQE) form an A20-type zinc finger. Residues Cys-18, Cys-22, Cys-34, Cys-37, Cys-114, Cys-117, Cys-128, Cys-130, Cys-135, His-138, His-144, and Cys-146 each coordinate Zn(2+). An AN1-type zinc finger spans residues 108–154 (PKGPSRCTTCNKRVGLTGFKCRCGSLFCGTHRYADVHDCSFNYHAAA).

Its function is as follows. May be involved in environmental stress response. This is Zinc finger A20 and AN1 domain-containing stress-associated protein 2 (SAP2) from Arabidopsis thaliana (Mouse-ear cress).